The sequence spans 448 residues: Deoxyguanosinetriphosphate triphosphohydrolase-like protein (448 aa).

Positions 67-260 constitute an HD domain; the sequence is RLTHSLEVSQ…MELADDIAYG (194 aa).

It belongs to the dGTPase family. Type 2 subfamily.

The chain is Deoxyguanosinetriphosphate triphosphohydrolase-like protein from Aliivibrio fischeri (strain MJ11) (Vibrio fischeri).